The primary structure comprises 1316 residues: DNA-directed RNA polymerase subunit beta' (1316 aa).

4 residues coordinate Zn(2+): cysteine 60, cysteine 62, cysteine 75, and cysteine 78. Positions 183-209 (ELEEEGAKSDVRRKVRDGGEREMRQLR) are disordered. Positions 535, 537, and 539 each coordinate Mg(2+). Residues cysteine 890, cysteine 966, cysteine 973, and cysteine 976 each coordinate Zn(2+).

It belongs to the RNA polymerase beta' chain family. As to quaternary structure, the RNAP catalytic core consists of 2 alpha, 1 beta, 1 beta' and 1 omega subunit. When a sigma factor is associated with the core the holoenzyme is formed, which can initiate transcription. Requires Mg(2+) as cofactor. It depends on Zn(2+) as a cofactor.

The enzyme catalyses RNA(n) + a ribonucleoside 5'-triphosphate = RNA(n+1) + diphosphate. Functionally, DNA-dependent RNA polymerase catalyzes the transcription of DNA into RNA using the four ribonucleoside triphosphates as substrates. The protein is DNA-directed RNA polymerase subunit beta' of Mycolicibacterium gilvum (strain PYR-GCK) (Mycobacterium gilvum (strain PYR-GCK)).